Reading from the N-terminus, the 232-residue chain is Ubiquinone biosynthesis O-methyltransferase (232 aa).

S-adenosyl-L-methionine-binding residues include Arg-36, Gly-55, Asp-76, and Leu-120.

Belongs to the methyltransferase superfamily. UbiG/COQ3 family.

It catalyses the reaction a 3-demethylubiquinol + S-adenosyl-L-methionine = a ubiquinol + S-adenosyl-L-homocysteine + H(+). It carries out the reaction a 3-(all-trans-polyprenyl)benzene-1,2-diol + S-adenosyl-L-methionine = a 2-methoxy-6-(all-trans-polyprenyl)phenol + S-adenosyl-L-homocysteine + H(+). It functions in the pathway cofactor biosynthesis; ubiquinone biosynthesis. Its function is as follows. O-methyltransferase that catalyzes the 2 O-methylation steps in the ubiquinone biosynthetic pathway. In Stutzerimonas stutzeri (strain A1501) (Pseudomonas stutzeri), this protein is Ubiquinone biosynthesis O-methyltransferase.